Consider the following 354-residue polypeptide: Hyaluronan and proteoglycan link protein 1 (354 aa).

Positions 1 to 15 (MKSLLLLVLISICWA) are excised as a propeptide. 2 N-linked (GlcNAc...) asparagine glycosylation sites follow: Asn-21 and Asn-56. The region spanning 38-152 (PHLLVEAEQA…EGLEDDTVVV (115 aa)) is the Ig-like V-type domain. Disulfide bonds link Cys-61–Cys-139, Cys-181–Cys-252, Cys-205–Cys-226, Cys-279–Cys-349, and Cys-304–Cys-325. Link domains lie at 159–254 (VVFP…FCFT) and 259–351 (GRFY…YCFR).

This sequence belongs to the HAPLN family. As to expression, widely expressed. Weakly expressed in the brain.

The protein localises to the secreted. The protein resides in the extracellular space. Its subcellular location is the extracellular matrix. In terms of biological role, stabilizes the aggregates of proteoglycan monomers with hyaluronic acid in the extracellular cartilage matrix. The sequence is that of Hyaluronan and proteoglycan link protein 1 (HAPLN1) from Homo sapiens (Human).